Here is an 89-residue protein sequence, read N- to C-terminus: Small ribosomal subunit protein uS15 (89 aa).

It belongs to the universal ribosomal protein uS15 family. In terms of assembly, part of the 30S ribosomal subunit. Forms a bridge to the 50S subunit in the 70S ribosome, contacting the 23S rRNA.

One of the primary rRNA binding proteins, it binds directly to 16S rRNA where it helps nucleate assembly of the platform of the 30S subunit by binding and bridging several RNA helices of the 16S rRNA. Functionally, forms an intersubunit bridge (bridge B4) with the 23S rRNA of the 50S subunit in the ribosome. This chain is Small ribosomal subunit protein uS15, found in Pelotomaculum thermopropionicum (strain DSM 13744 / JCM 10971 / SI).